The sequence spans 268 residues: Leucyl/phenylalanyl-tRNA--protein transferase (268 aa).

This sequence belongs to the L/F-transferase family.

It is found in the cytoplasm. It carries out the reaction N-terminal L-lysyl-[protein] + L-leucyl-tRNA(Leu) = N-terminal L-leucyl-L-lysyl-[protein] + tRNA(Leu) + H(+). The catalysed reaction is N-terminal L-arginyl-[protein] + L-leucyl-tRNA(Leu) = N-terminal L-leucyl-L-arginyl-[protein] + tRNA(Leu) + H(+). It catalyses the reaction L-phenylalanyl-tRNA(Phe) + an N-terminal L-alpha-aminoacyl-[protein] = an N-terminal L-phenylalanyl-L-alpha-aminoacyl-[protein] + tRNA(Phe). Functions in the N-end rule pathway of protein degradation where it conjugates Leu, Phe and, less efficiently, Met from aminoacyl-tRNAs to the N-termini of proteins containing an N-terminal arginine or lysine. The polypeptide is Leucyl/phenylalanyl-tRNA--protein transferase (Psychrobacter arcticus (strain DSM 17307 / VKM B-2377 / 273-4)).